Here is a 727-residue protein sequence, read N- to C-terminus: Elongation factor 2 (727 aa).

Residues 19-260 (DQIRNMGICA…MAIKHLPNPL (242 aa)) form the tr-type G domain. Residues 28–35 (AHIDHGKT), 94–98 (DTPGH), and 148–151 (NKVD) each bind GTP. His603 bears the Diphthamide mark.

This sequence belongs to the TRAFAC class translation factor GTPase superfamily. Classic translation factor GTPase family. EF-G/EF-2 subfamily.

It localises to the cytoplasm. Catalyzes the GTP-dependent ribosomal translocation step during translation elongation. During this step, the ribosome changes from the pre-translocational (PRE) to the post-translocational (POST) state as the newly formed A-site-bound peptidyl-tRNA and P-site-bound deacylated tRNA move to the P and E sites, respectively. Catalyzes the coordinated movement of the two tRNA molecules, the mRNA and conformational changes in the ribosome. The polypeptide is Elongation factor 2 (fusA) (Methanococcus vannielii (strain ATCC 35089 / DSM 1224 / JCM 13029 / OCM 148 / SB)).